The following is a 325-amino-acid chain: MNALTAVQNNAVDSGQDYSGFTLIPSAQSPRLLELTFTEQTTKQFLEQVAEWPVQALEYKSFLRFRVGKILDDLCANQLQPLLLKTLLNRAEGALLINAVGVDDVAQADEMVKLATAVAHLIGRSNFDAMSGQYYARFVVKNVDNSDSYLRQPHRVMELHNDGTYVEEITDYVLMMKIDEQNMQGGNSLLLHLDDWEHLEHYFRHPLARRPMRFAAPPSKNVSKDVFHPVFDVDQQGRPVMRYIDQFVQPKDFEEGVWLSELSDAIETSKGILSVPVPVGKFLLINNLFWLHGRDRFTAHPDLRRELMRQRGYFAYATHHYQTHQ.

Fe cation is bound by residues histidine 160, aspartate 162, and histidine 292.

This sequence belongs to the glutarate hydroxylase family. As to quaternary structure, homotetramer. The cofactor is Fe(2+).

The catalysed reaction is glutarate + 2-oxoglutarate + O2 = (S)-2-hydroxyglutarate + succinate + CO2. It participates in amino-acid degradation. Functionally, acts as an alpha-ketoglutarate-dependent dioxygenase catalyzing hydroxylation of glutarate (GA) to L-2-hydroxyglutarate (L2HG). Functions in a L-lysine degradation pathway that proceeds via cadaverine, glutarate and L-2-hydroxyglutarate. This is Glutarate 2-hydroxylase from Escherichia fergusonii (strain ATCC 35469 / DSM 13698 / CCUG 18766 / IAM 14443 / JCM 21226 / LMG 7866 / NBRC 102419 / NCTC 12128 / CDC 0568-73).